Here is a 557-residue protein sequence, read N- to C-terminus: Jerky protein (557 aa).

Positions 11–62 (KGEKRKRVVLTLKEKIDICTRLERGESRKALMQEYNVGMSTLYDIKAHKAQL) constitute an HTH psq-type domain. 2 DNA-binding regions (H-T-H motif) span residues 38 to 58 (RKAL…IKAH) and 110 to 142 (PMLI…FKAR). Residues 77-149 (QRRTLHTPKL…KARHGIKKLD (73 aa)) enclose the HTH CENPB-type domain. Residues 213-382 (KDRLTVLMCA…VPSQVFQRAW (170 aa)) form the DDE-1 domain.

The protein belongs to the tigger transposable element derived protein family. Brain; highest in the temporal and brainstem regions.

It localises to the nucleus. May bind DNA. In Mus musculus (Mouse), this protein is Jerky protein.